A 202-amino-acid polypeptide reads, in one-letter code: NAD(P)H dehydrogenase (quinone) 2 (202 aa).

One can recognise a Flavodoxin-like domain in the interval 4–190 (VLVLYYSSYG…AGAFHQGEIV (187 aa)). FMN is bound by residues 10–15 (SSYGHI) and 78–80 (TRF). Tyr12 contacts NAD(+). Trp98 lines the substrate pocket. FMN is bound by residues 113 to 119 (STGTQHG) and His134.

The protein belongs to the WrbA family. FMN serves as cofactor.

The catalysed reaction is a quinone + NADH + H(+) = a quinol + NAD(+). The enzyme catalyses a quinone + NADPH + H(+) = a quinol + NADP(+). The chain is NAD(P)H dehydrogenase (quinone) 2 from Rhizobium meliloti (strain 1021) (Ensifer meliloti).